The following is a 440-amino-acid chain: Xylose isomerase (440 aa).

Catalysis depends on residues His101 and Asp104. Mg(2+)-binding residues include Glu232, Glu268, His271, Asp296, Asp307, Asp309, and Asp339.

This sequence belongs to the xylose isomerase family. In terms of assembly, homotetramer. The cofactor is Mg(2+).

The protein localises to the cytoplasm. It catalyses the reaction alpha-D-xylose = alpha-D-xylulofuranose. This is Xylose isomerase from Salmonella paratyphi B (strain ATCC BAA-1250 / SPB7).